Consider the following 128-residue polypeptide: Holo-[acyl-carrier-protein] synthase (128 aa).

Residues Asp-10 and Glu-59 each coordinate Mg(2+).

Belongs to the P-Pant transferase superfamily. AcpS family. Requires Mg(2+) as cofactor.

It is found in the cytoplasm. The catalysed reaction is apo-[ACP] + CoA = holo-[ACP] + adenosine 3',5'-bisphosphate + H(+). Its function is as follows. Transfers the 4'-phosphopantetheine moiety from coenzyme A to a Ser of acyl-carrier-protein. The polypeptide is Holo-[acyl-carrier-protein] synthase (Syntrophotalea carbinolica (strain DSM 2380 / NBRC 103641 / GraBd1) (Pelobacter carbinolicus)).